A 134-amino-acid chain; its full sequence is Small ribosomal subunit protein uS8c (134 aa).

The protein belongs to the universal ribosomal protein uS8 family. Part of the 30S ribosomal subunit.

The protein resides in the plastid. Its subcellular location is the chloroplast. Functionally, one of the primary rRNA binding proteins, it binds directly to 16S rRNA central domain where it helps coordinate assembly of the platform of the 30S subunit. This is Small ribosomal subunit protein uS8c (rps8) from Gossypium barbadense (Sea Island cotton).